Here is a 148-residue protein sequence, read N- to C-terminus: Large-conductance mechanosensitive channel (148 aa).

2 helical membrane passes run 12-32 (AFAMKGNVIDMAVGVVIGGAF) and 85-105 (GQFLQATFDFLIIAFAIFLFI).

The protein belongs to the MscL family. Homopentamer.

Its subcellular location is the cell inner membrane. Functionally, channel that opens in response to stretch forces in the membrane lipid bilayer. May participate in the regulation of osmotic pressure changes within the cell. The protein is Large-conductance mechanosensitive channel of Bacteroides thetaiotaomicron (strain ATCC 29148 / DSM 2079 / JCM 5827 / CCUG 10774 / NCTC 10582 / VPI-5482 / E50).